Reading from the N-terminus, the 721-residue chain is Cell wall protein RBT1 (721 aa).

Positions 1–20 (MRFATAQLAALAYYILSTEA) are cleaved as a signal peptide. The region spanning 55 to 278 (GSKNKREAEI…DCQCDTPSPS (224 aa)) is the Flo11 domain. 3 disordered regions span residues 278 to 410 (STTT…LTTT), 453 to 510 (LTET…TVTE), and 555 to 666 (TPAT…ALVS). Positions 454 to 499 (TETTPVPSSVDSTSVTSAPETTPESTAPESSAPESSAPESSAPVTE) are enriched in low complexity. The span at 500–510 (TPTGPVSTVTE) shows a compositional bias: polar residues. 2 stretches are compositionally biased toward low complexity: residues 555-575 (TPAT…VPAT) and 584-663 (SSAP…KTSA). The GPI-anchor amidated serine moiety is linked to residue serine 696. The propeptide at 697–721 (SFEGAGNNMRLTYGAAIIGLAAFLI) is removed in mature form.

It belongs to the HWP1 family. Post-translationally, the GPI-anchor is attached to the protein in the endoplasmic reticulum and serves to target the protein to the cell surface. There, the glucosamine-inositol phospholipid moiety is cleaved off and the GPI-modified mannoprotein is covalently attached via its lipidless GPI glycan remnant to the 1,6-beta-glucan of the outer cell wall layer.

The protein localises to the secreted. It is found in the cell wall. Its subcellular location is the membrane. Its function is as follows. GPI-anchored cell wall protein required for mating efficiency, biofilm formation, and virulence. Involved in normal disseminated infection, but not in intestinal colonization. The chain is Cell wall protein RBT1 (RBT1) from Candida albicans (strain SC5314 / ATCC MYA-2876) (Yeast).